Here is a 263-residue protein sequence, read N- to C-terminus: Adaptin ear-binding coat-associated protein 2 (263 aa).

2 disordered regions span residues 166-194 and 219-263; these read KKKEGAAGNPRVRPASTGGLSLLPPPPGG and APSS…WVQF. Ser-181 carries the post-translational modification Phosphoserine. 2 short sequence motifs (WXXF motif) span residues 240–243 and 260–263; these read WGDF and WVQF. Over residues 246–263 the composition is skewed to low complexity; the sequence is STGSTSSQTQPGTGWVQF.

This sequence belongs to the NECAP family. Interacts with AP1G1 and AP2A1 components of the adapter protein complexes AP-1 and AP-2. Interacts with the GAE domain proteins GGA1, GGA2 and GGA3.

It is found in the cytoplasmic vesicle. The protein resides in the clathrin-coated vesicle membrane. The protein localises to the cell membrane. Functionally, involved in endocytosis. The sequence is that of Adaptin ear-binding coat-associated protein 2 (NECAP2) from Homo sapiens (Human).